Here is a 272-residue protein sequence, read N- to C-terminus: Ribosomal RNA small subunit methyltransferase J (272 aa).

S-adenosyl-L-methionine contacts are provided by residues 120 to 121 (RD), 136 to 137 (ER), 171 to 172 (SS), and D188.

Belongs to the methyltransferase superfamily. RsmJ family.

The protein localises to the cytoplasm. The catalysed reaction is guanosine(1516) in 16S rRNA + S-adenosyl-L-methionine = N(2)-methylguanosine(1516) in 16S rRNA + S-adenosyl-L-homocysteine + H(+). In terms of biological role, specifically methylates the guanosine in position 1516 of 16S rRNA. The chain is Ribosomal RNA small subunit methyltransferase J from Colwellia psychrerythraea (strain 34H / ATCC BAA-681) (Vibrio psychroerythus).